We begin with the raw amino-acid sequence, 375 residues long: Carbamoyl phosphate synthase small chain (375 aa).

A CPSase region spans residues 1–186; that stretch reads MRALLALEDG…LEPGGCAWVG (186 aa). Residues serine 45, glycine 238, and glycine 240 each coordinate L-glutamine. A Glutamine amidotransferase type-1 domain is found at 190–375; that stretch reads RLVVYDFGIK…RNMVREAAGC (186 aa). Cysteine 265 (nucleophile) is an active-site residue. Residues leucine 266, glutamine 269, asparagine 307, glycine 309, and phenylalanine 310 each contribute to the L-glutamine site. Active-site residues include histidine 348 and glutamate 350.

Belongs to the CarA family. Composed of two chains; the small (or glutamine) chain promotes the hydrolysis of glutamine to ammonia, which is used by the large (or ammonia) chain to synthesize carbamoyl phosphate. Tetramer of heterodimers (alpha,beta)4.

It carries out the reaction hydrogencarbonate + L-glutamine + 2 ATP + H2O = carbamoyl phosphate + L-glutamate + 2 ADP + phosphate + 2 H(+). The catalysed reaction is L-glutamine + H2O = L-glutamate + NH4(+). It functions in the pathway amino-acid biosynthesis; L-arginine biosynthesis; carbamoyl phosphate from bicarbonate: step 1/1. The protein operates within pyrimidine metabolism; UMP biosynthesis via de novo pathway; (S)-dihydroorotate from bicarbonate: step 1/3. Its function is as follows. Small subunit of the glutamine-dependent carbamoyl phosphate synthetase (CPSase). CPSase catalyzes the formation of carbamoyl phosphate from the ammonia moiety of glutamine, carbonate, and phosphate donated by ATP, constituting the first step of 2 biosynthetic pathways, one leading to arginine and/or urea and the other to pyrimidine nucleotides. The small subunit (glutamine amidotransferase) binds and cleaves glutamine to supply the large subunit with the substrate ammonia. The sequence is that of Carbamoyl phosphate synthase small chain from Nitratidesulfovibrio vulgaris (strain ATCC 29579 / DSM 644 / CCUG 34227 / NCIMB 8303 / VKM B-1760 / Hildenborough) (Desulfovibrio vulgaris).